The sequence spans 598 residues: uncharacterized protein (598 aa).

Residues 1-19 (MSVPLRFSTPSSSPSASDN) are compositionally biased toward low complexity. Disordered regions lie at residues 1-54 (MSVP…MRPK), 139-176 (QKNQ…PNWK), and 194-279 (EAQL…ITMP). At 1–313 (MSVPLRFSTP…CKIRHFFREG (313 aa)) the chain is on the cytoplasmic side. Positions 30–48 (ELDTFNTTDVPRRVNTTKA) are enriched in polar residues. A compositionally biased stretch (low complexity) spans 147 to 165 (RANSRVNSRANSRANSSVS). Composition is skewed to polar residues over residues 218-242 (FSLQ…SSAI) and 255-276 (PRNN…SQDI). A helical transmembrane segment spans residues 314–334 (FAEFLGTLVLVVFGVGSNLQA). The Extracellular segment spans residues 335 to 346 (TVTNGAGGSFES). A helical transmembrane segment spans residues 347–367 (LSFAWGFGCMLGVYIAGGISG). Topologically, residues 368–388 (GHVNPAVTISLAIFRKFPWYK) are cytoplasmic. The short motif at 371–373 (NPA) is the NPA 1 element. Residues 389–409 (VPIYIFFQIWGAFFGGALAYG) traverse the membrane as a helical segment. At 410-444 (YHWSSITEFEGGKDIRTPATGGCLYTNPKPYVTWR) the chain is on the extracellular side. A helical membrane pass occupies residues 445-465 (NAFFDEFIGTAVLVGCLFAIL). Residues 466–473 (DDTNSPPT) are Cytoplasmic-facing. The chain crosses the membrane as a helical span at residues 474–494 (QGMTAFIVGLLIAAIGMALGY). The Extracellular segment spans residues 495–532 (QTSFTLNPARDLGPRMFAWWIGYGPHSFHLYHWWWTWG). Positions 501-503 (NPA) match the NPA 2 motif. A helical membrane pass occupies residues 533 to 553 (AWGGTIGGGIAGGLIYDLVIF). Residues 554-598 (TGPESPLNYPDNGFIDKKVHQITAKFEKEEEVENLEKTDSPIENN) lie on the Cytoplasmic side of the membrane.

The protein belongs to the MIP/aquaporin (TC 1.A.8) family.

Its subcellular location is the membrane. This is an uncharacterized protein from Schizosaccharomyces pombe (strain 972 / ATCC 24843) (Fission yeast).